The chain runs to 525 residues: MTKNIHKHRILILDFGSQYTQLVARRVREIGVYCELWAWDVTEDQIREFNPSGIILSGGPESTTEHDSPRAPDYVFTAGVPVLGVCYGMQTMAMQLGGKVEGSNQREFGYAQVEIKTDSALIRDIKDAINPAGEAVLDVWMSHGDKVTAIPSDFVTVASTDTCPFAIMANEEKRFYGVQFHPEVTHTKQGQRLLERFVLDICACEALWTPATIIEDAIVRLREQIGEDHVILGLSGGVDSSVTAMLLHRAIGKRLTCVFVDNGLLRLNEADQVLEMFGDKFGLNIVHVAAEDRFLAALAGVDEPEAKRKIIGRVFVELFDEEACKQEQVKWLAQGTIYPDVIESAASATGKAHVIKSHHNVGGLPKEMKLGLVEPLKELFKDEVRKIGLELGLPYDMLYRHPFPGPGLGVRVLGEVKKEYCDLLRRADAIFIEELHKADLYNKVSQAFTVFLPVRSVGVMGDGRKYDWVVSLRAVETIDFMTAHWAHLPYDFLGRVSNRIINEVNGISRVVYDISGKPPATIEWE.

Positions 9-207 (RILILDFGSQ…VLDICACEAL (199 aa)) constitute a Glutamine amidotransferase type-1 domain. Cys86 (nucleophile) is an active-site residue. Residues His181 and Glu183 contribute to the active site. The GMPS ATP-PPase domain occupies 208–400 (WTPATIIEDA…LGLPYDMLYR (193 aa)). 235 to 241 (SGGVDSS) serves as a coordination point for ATP.

Homodimer.

The enzyme catalyses XMP + L-glutamine + ATP + H2O = GMP + L-glutamate + AMP + diphosphate + 2 H(+). It participates in purine metabolism; GMP biosynthesis; GMP from XMP (L-Gln route): step 1/1. Catalyzes the synthesis of GMP from XMP. The polypeptide is GMP synthase [glutamine-hydrolyzing] (Yersinia enterocolitica serotype O:8 / biotype 1B (strain NCTC 13174 / 8081)).